A 544-amino-acid chain; its full sequence is MAKEIFYSDDARNRLYEGVRKLNDAVKVTMGPRGRNVLIQKSFGAPSITKDGVSVAKEVELKDTIENMGASLVREVASKTNDQAGDGTTTATVLAHAIFKEGLRNVTAGANPIEVKRGMDKEVAALIDELKNIAKKVSGSKEIAQIATISANSDESIGKLIADAMEKVGKDGVITVEEAKSIEDELNVVEGMQFDRGYLSPYFITNAEKMQVELSNPFILLFDKKITNLKDLLPVLEQIQKTGKPLLIVAEDIEGEALATLVVNKLRGVLNISAVKAPGFGDRRKAMLEDIAILTGGEVISEELGRTLESATLEDLGQASSVVIDKDNTTIVNGAGEKSAIDARINQIKAQIAETTSDYDKEKLQERLAKLSGGVAVIKVGAATETEMKEKKDRVDDALSATRAAVEEGIVVGGGSALILASKRVKLDLSGDEAIGAEIVRRALRAPLRQIAENAGFDAGVVTNAVEVSSDVNYGFNAVSGEYVNMFEAGIIDPVKVERVALQNAVSVASLLLTTEATISELKEDKPMPAMPDMGGMGGMGGMM.

ATP is bound by residues 29-32 (TMGP), Lys50, 86-90 (DGTTT), Gly414, 477-479 (NAV), and Asp493.

This sequence belongs to the chaperonin (HSP60) family. In terms of assembly, forms a cylinder of 14 subunits composed of two heptameric rings stacked back-to-back. Interacts with the co-chaperonin GroES.

The protein localises to the cytoplasm. It carries out the reaction ATP + H2O + a folded polypeptide = ADP + phosphate + an unfolded polypeptide.. Together with its co-chaperonin GroES, plays an essential role in assisting protein folding. The GroEL-GroES system forms a nano-cage that allows encapsulation of the non-native substrate proteins and provides a physical environment optimized to promote and accelerate protein folding. This Campylobacter curvus (strain 525.92) protein is Chaperonin GroEL.